We begin with the raw amino-acid sequence, 592 residues long: Protein alan shepard (592 aa).

The tract at residues 1-68 is disordered; the sequence is MGGPHHQHQQ…ASVAAAPPTP (68 aa). The span at 18-28 shows a compositional bias: gly residues; it reads VGGGNGHGGGA. Positions 36–54 are enriched in polar residues; the sequence is PNSQQLPPQMPRSQNYANG. Low complexity predominate over residues 55 to 64; the sequence is SSSAASVAAA. Phosphotyrosine occurs at positions 124 and 140. Residues 162–224 form a disordered region; that stretch reads PATTTYGQRV…AQNQNQQGGE (63 aa). The segment covering 176 to 224 has biased composition (low complexity); that stretch reads SPSNTNSSSSSNTGSQSGTLSTSLSNTTNTNTTMGPNGTAQNQNQQGGE. RRM domains lie at 229-307 and 319-398; these read TNLY…IWVL and TNLY…FADG. Residues 565 to 592 form a disordered region; sequence PMTDSEQASTAASPDEAYTQYPHQAAPK.

Has a role in the perception of gravity. This Drosophila mojavensis (Fruit fly) protein is Protein alan shepard.